The following is a 216-amino-acid chain: LHFPL tetraspan subfamily member 3 protein (216 aa).

A run of 4 helical transmembrane segments spans residues 22-42, 96-116, 126-146, and 177-197; these read IGVL…VCFV, FFIG…ALFF, ICGW…MIYP, and ILAI…FVLG.

It belongs to the LHFP family.

It localises to the membrane. This is LHFPL tetraspan subfamily member 3 protein from Danio rerio (Zebrafish).